The primary structure comprises 360 residues: Phosphoserine aminotransferase (360 aa).

Arg-41 lines the L-glutamate pocket. Pyridoxal 5'-phosphate is bound by residues 75 to 76, Trp-99, Thr-152, Asp-171, and Gln-194; that span reads AS. Lys-195 carries the N6-(pyridoxal phosphate)lysine modification. Position 236–237 (236–237) interacts with pyridoxal 5'-phosphate; sequence NT.

This sequence belongs to the class-V pyridoxal-phosphate-dependent aminotransferase family. SerC subfamily. Homodimer. Pyridoxal 5'-phosphate is required as a cofactor.

It is found in the cytoplasm. It catalyses the reaction O-phospho-L-serine + 2-oxoglutarate = 3-phosphooxypyruvate + L-glutamate. The catalysed reaction is 4-(phosphooxy)-L-threonine + 2-oxoglutarate = (R)-3-hydroxy-2-oxo-4-phosphooxybutanoate + L-glutamate. It participates in amino-acid biosynthesis; L-serine biosynthesis; L-serine from 3-phospho-D-glycerate: step 2/3. It functions in the pathway cofactor biosynthesis; pyridoxine 5'-phosphate biosynthesis; pyridoxine 5'-phosphate from D-erythrose 4-phosphate: step 3/5. Its function is as follows. Catalyzes the reversible conversion of 3-phosphohydroxypyruvate to phosphoserine and of 3-hydroxy-2-oxo-4-phosphonooxybutanoate to phosphohydroxythreonine. This Porphyromonas gingivalis (strain ATCC 33277 / DSM 20709 / CIP 103683 / JCM 12257 / NCTC 11834 / 2561) protein is Phosphoserine aminotransferase.